Reading from the N-terminus, the 919-residue chain is Kinesin-like protein KIN-6 (919 aa).

The segment at 1–59 is disordered; that stretch reads MVRLSTKPPNPKVEMNLKEPPITGAGAGAAASPPAPSTLRRNPPRSARPPPTPLPNSKP. A compositionally biased stretch (low complexity) spans 28–45; the sequence is GAAASPPAPSTLRRNPPR. Residues 46–56 show a composition bias toward pro residues; the sequence is SARPPPTPLPN. The 344-residue stretch at 72-415 folds into the Kinesin motor domain; that stretch reads RLKVFLRIRP…LRQASPYMKI (344 aa). Residue 171-178 participates in ATP binding; sequence GPTGSGKT. 5 disordered regions span residues 591 to 615, 674 to 700, 711 to 730, 737 to 764, and 886 to 919; these read EEVS…TGTG, SESC…SFTD, SPQF…EEER, TTEG…EVNS, and KEEK…GRAQ. A compositionally biased stretch (basic and acidic residues) spans 597-612; the sequence is STGHGPERSSDYDDKT. Residues 685-697 show a composition bias toward low complexity; it reads HSSSSLDHPSDQS. Over residues 755-764 the composition is skewed to polar residues; that stretch reads TPSCSQEVNS. The span at 886–912 shows a compositional bias: basic and acidic residues; the sequence is KEEKVKSSRDAMGRSDKLIRLLTDHPP.

Belongs to the TRAFAC class myosin-kinesin ATPase superfamily. Kinesin family. KIN-6 subfamily.

The protein is Kinesin-like protein KIN-6 of Oryza sativa subsp. japonica (Rice).